Here is a 318-residue protein sequence, read N- to C-terminus: NADH-ubiquinone oxidoreductase chain 1 (318 aa).

The next 9 helical transmembrane spans lie at 2–22, 37–57, 69–89, 100–120, 136–156, 171–191, 231–251, 253–273, and 293–313; these read FLMN…FLTL, PNIV…KLFI, LMFT…WIPM, LGVL…LWSG, VAQT…VMMM, HMWL…STLA, IIMM…NPLF, ELFT…FLWV, and FLPL…LSAG.

It belongs to the complex I subunit 1 family. As to quaternary structure, core subunit of respiratory chain NADH dehydrogenase (Complex I) which is composed of 45 different subunits.

It localises to the mitochondrion inner membrane. The catalysed reaction is a ubiquinone + NADH + 5 H(+)(in) = a ubiquinol + NAD(+) + 4 H(+)(out). Functionally, core subunit of the mitochondrial membrane respiratory chain NADH dehydrogenase (Complex I) which catalyzes electron transfer from NADH through the respiratory chain, using ubiquinone as an electron acceptor. Essential for the catalytic activity and assembly of complex I. The polypeptide is NADH-ubiquinone oxidoreductase chain 1 (MT-ND1) (Zaedyus pichiy (Pichi)).